Here is a 113-residue protein sequence, read N- to C-terminus: Hydrogenase maturation factor HypA (113 aa).

His2 contributes to the Ni(2+) binding site. Residues Cys73, Cys76, Cys89, and Cys92 each coordinate Zn(2+).

Belongs to the HypA/HybF family.

In terms of biological role, involved in the maturation of [NiFe] hydrogenases. Required for nickel insertion into the metal center of the hydrogenase. The chain is Hydrogenase maturation factor HypA from Picosynechococcus sp. (strain ATCC 27264 / PCC 7002 / PR-6) (Agmenellum quadruplicatum).